Consider the following 136-residue polypeptide: Large ribosomal subunit protein uL16 (136 aa).

This sequence belongs to the universal ribosomal protein uL16 family. As to quaternary structure, part of the 50S ribosomal subunit.

In terms of biological role, binds 23S rRNA and is also seen to make contacts with the A and possibly P site tRNAs. The sequence is that of Large ribosomal subunit protein uL16 from Aggregatibacter actinomycetemcomitans (Actinobacillus actinomycetemcomitans).